A 71-amino-acid chain; its full sequence is VKRPMNAFMVWSQNERRKIMDQWPDMHNAEISKRLGRRWQLLQDSEKIPFVKEASVRLKHMADYPDYKYRP.

The segment at residues 1-68 (VKRPMNAFMV…KHMADYPDYK (68 aa)) is a DNA-binding region (HMG box).

Its subcellular location is the nucleus. This is SRY-related protein LG28 from Eublepharis macularius (Leopard gecko).